We begin with the raw amino-acid sequence, 274 residues long: 2,3,4,5-tetrahydropyridine-2,6-dicarboxylate N-succinyltransferase (274 aa).

Arginine 105 and aspartate 142 together coordinate substrate.

Belongs to the transferase hexapeptide repeat family. Homotrimer.

It localises to the cytoplasm. It catalyses the reaction (S)-2,3,4,5-tetrahydrodipicolinate + succinyl-CoA + H2O = (S)-2-succinylamino-6-oxoheptanedioate + CoA. It participates in amino-acid biosynthesis; L-lysine biosynthesis via DAP pathway; LL-2,6-diaminopimelate from (S)-tetrahydrodipicolinate (succinylase route): step 1/3. The protein is 2,3,4,5-tetrahydropyridine-2,6-dicarboxylate N-succinyltransferase of Thiobacillus denitrificans (strain ATCC 25259 / T1).